The sequence spans 1649 residues: eIF-2-alpha kinase GCN2 (1649 aa).

3 disordered regions span residues M1–H25, N138–Q158, and H227–C256. Residues H25–H137 enclose the RWD domain. A coiled-coil region spans residues H146–S205. S230 carries the post-translational modification Phosphoserine. Positions G237 to R249 are enriched in basic residues. 2 consecutive Protein kinase domains span residues V296–I539 and F590–L1001. ATP contacts are provided by residues L596–V604 and K619. 2 disordered regions span residues E660–L750 and E766–P788. T667 carries the post-translational modification Phosphothreonine. Residues L705–R717 are compositionally biased toward polar residues. Residues S731–E740 show a composition bias toward acidic residues. Over residues N778–E787 the composition is skewed to basic and acidic residues. D848 functions as the Proton acceptor in the catalytic mechanism. T871 carries the phosphothreonine modification. Residues T899 and T904 each carry the phosphothreonine; by autocatalysis modification. The interval V1022–K1493 is histidyl-tRNA synthetase-like. N6-acetyllysine is present on K1259.

It belongs to the protein kinase superfamily. Ser/Thr protein kinase family. GCN2 subfamily. In terms of assembly, homodimer; homodimerization is important for kinase activation by uncharged tRNAs. Interacts with GCN1; this interaction stimulates EIF2AK4/GCN2 kinase activity and is impaired by IMPACT upon a variety of stress conditions, such as amino acid depletion, UV-C irradiation, proteasome inhibitor treatment and glucose deprivation. Interacts with DNAJC3; this interaction inhibits EIF2AK4/GCN2 kinase activity during endoplasmic reticulum (ER), hypothermic and amino acid-starving stress conditions. Interacts with MAP3K20; activates EIF2AK4/GCN2 kinase activity in response to moderate ribotoxic stress. As to quaternary structure, (Microbial infection) Interacts with hepatitis E virus (HEV) ORF1 protease; this interaction inhibits dimerization of EIF2AK4 and prevents EIF2AK4-mediated phosphorylation of EIF2A. Autophosphorylated; autophosphorylation on Thr-899 is increased upon amino acid starvation and in UV irradiation cells and inhibited in presence of IMPACT. Widely expressed. Expressed in lung, smooth muscle cells and macrophages.

Its subcellular location is the cytoplasm. The catalysed reaction is L-seryl-[protein] + ATP = O-phospho-L-seryl-[protein] + ADP + H(+). The enzyme catalyses L-threonyl-[protein] + ATP = O-phospho-L-threonyl-[protein] + ADP + H(+). Functionally, metabolic-stress sensing protein kinase that phosphorylates the alpha subunit of eukaryotic translation initiation factor 2 (EIF2S1/eIF-2-alpha) in response to low amino acid availability. Plays a role as an activator of the integrated stress response (ISR) required for adaptation to amino acid starvation. EIF2S1/eIF-2-alpha phosphorylation in response to stress converts EIF2S1/eIF-2-alpha into a global protein synthesis inhibitor, leading to a global attenuation of cap-dependent translation, and thus to a reduced overall utilization of amino acids, while concomitantly initiating the preferential translation of ISR-specific mRNAs, such as the transcriptional activator ATF4, and hence allowing ATF4-mediated reprogramming of amino acid biosynthetic gene expression to alleviate nutrient depletion. Binds uncharged tRNAs. Required for the translational induction of protein kinase PRKCH following amino acid starvation. Involved in cell cycle arrest by promoting cyclin D1 mRNA translation repression after the unfolded protein response pathway (UPR) activation or cell cycle inhibitor CDKN1A/p21 mRNA translation activation in response to amino acid deprivation. Plays a role in the consolidation of synaptic plasticity, learning as well as formation of long-term memory. Plays a role in neurite outgrowth inhibition. Plays a proapoptotic role in response to glucose deprivation. Promotes global cellular protein synthesis repression in response to UV irradiation independently of the stress-activated protein kinase/c-Jun N-terminal kinase (SAPK/JNK) and p38 MAPK signaling pathways. Plays a role in the antiviral response against alphavirus infection; impairs early viral mRNA translation of the incoming genomic virus RNA, thus preventing alphavirus replication. Its function is as follows. (Microbial infection) Plays a role in modulating the adaptive immune response to yellow fever virus infection; promotes dendritic cells to initiate autophagy and antigene presentation to both CD4(+) and CD8(+) T-cells under amino acid starvation. This is eIF-2-alpha kinase GCN2 from Homo sapiens (Human).